The chain runs to 695 residues: Putative pentatricopeptide repeat-containing protein At1g77010, mitochondrial (695 aa).

The N-terminal 64 residues, 1–64 (MILKYNSSYR…KGFLSSIVIV (64 aa)), are a transit peptide targeting the mitochondrion. 17 PPR repeats span residues 61 to 91 (IVIV…MPDR), 92 to 122 (NYFS…MPER), 123 to 157 (DGYS…DVVT), 159 to 184 (NSLL…LNFS), 186 to 220 (DAIT…GVEC), 221 to 251 (DSKM…IREP), 252 to 282 (DDHS…KSNR), 283 to 313 (CVIL…MRNE), 317 to 351 (DSRT…GLID), 352 to 382 (DIVV…VESY), 383 to 417 (DTIL…SLIS), 418 to 448 (WNSM…DLPT), 449 to 483 (DEVS…GLDS), 484 to 514 (DQVV…MVKS), 515 to 549 (DEVP…GIRP), 550 to 585 (TQIT…GFVP), and 586 to 616 (DKEH…MPFD). The tract at residues 621-695 (MWSSILRGCV…KNPGSSWTDC (75 aa)) is type E motif; degenerate.

The protein belongs to the PPR family. PCMP-E subfamily.

It localises to the mitochondrion. This is Putative pentatricopeptide repeat-containing protein At1g77010, mitochondrial (PCMP-E5) from Arabidopsis thaliana (Mouse-ear cress).